Here is a 393-residue protein sequence, read N- to C-terminus: Prokineticin receptor 1 (393 aa).

Topologically, residues 1–62 are extracellular; it reads METTMGFMDD…TNSRTFFAAK (62 aa). 3 N-linked (GlcNAc...) asparagine glycosylation sites follow: Asn11, Asn14, and Asn36. The helical transmembrane segment at 63-83 threads the bilayer; it reads IVIGMALVGIMLVCGIGNFIF. The Cytoplasmic segment spans residues 84-98; sequence IAALVRYKKLRNLTN. The helical transmembrane segment at 99–119 threads the bilayer; it reads LLIANLAISDFLVAIVCCPFE. Topologically, residues 120–146 are extracellular; that stretch reads MDYYVVRQLSWEHGHVLCTSVNYLRTV. Cys137 and Cys217 are disulfide-bonded. The chain crosses the membrane as a helical span at residues 147–167; sequence SLYVSTNALLAIAIDRYLAIV. At 168–180 the chain is on the cytoplasmic side; that stretch reads HPLRPRMKCQTAT. A helical transmembrane segment spans residues 181 to 201; the sequence is GLIALVWTVSILIAIPSAYFT. The Extracellular portion of the chain corresponds to 202-232; it reads TETVLVIVKSQEKIFCGQIWPVDQQLYYKSY. The chain crosses the membrane as a helical span at residues 233–253; that stretch reads FLFIFGIEFVGPVVTMTLCYA. Residues 254–282 lie on the Cytoplasmic side of the membrane; it reads RISRELWFKAVPGFQTEQIRKRLRCRRKT. Residues 283-303 form a helical membrane-spanning segment; the sequence is VLVLMCILTAYVLCWAPFYGF. Residues 304–322 lie on the Extracellular side of the membrane; that stretch reads TIVRDFFPTVFVKEKHYLT. A helical membrane pass occupies residues 323-343; sequence AFYIVECIAMSNSMINTLCFV. The Cytoplasmic portion of the chain corresponds to 344–393; it reads TVKNDTVKYFKKIMLLHWKASYNGGKSSADLDLKTIGMPATEEVDCIRLK.

Belongs to the G-protein coupled receptor 1 family. In terms of tissue distribution, localizes to glandular epithelium, stroma and vascular endothelial cells of first trimester decidua (at protein level). Up-regulated in first trimester decidua when compared with non-pregnant endometrium. Expressed in the stomach, throughout the small intestine, colon, rectum, thyroid gland, pituitary gland, salivary gland, adrenal gland, testis, ovary, brain, spleen, prostate and pancreas.

It localises to the cell membrane. Its function is as follows. Receptor for prokineticin 1. Exclusively coupled to the G(q) subclass of heteromeric G proteins. Activation leads to mobilization of calcium, stimulation of phosphoinositide turnover and activation of p44/p42 mitogen-activated protein kinase. May play a role during early pregnancy. The sequence is that of Prokineticin receptor 1 (PROKR1) from Homo sapiens (Human).